Reading from the N-terminus, the 486-residue chain is 2-isopropylmalate synthase (486 aa).

Residues Val-4–Ala-266 enclose the Pyruvate carboxyltransferase domain. Mn(2+)-binding residues include Asp-13, His-201, His-203, and Asn-237. Positions Lys-390–Ala-486 are regulatory domain.

It belongs to the alpha-IPM synthase/homocitrate synthase family. LeuA type 1 subfamily. Requires Mn(2+) as cofactor.

The protein resides in the cytoplasm. The enzyme catalyses 3-methyl-2-oxobutanoate + acetyl-CoA + H2O = (2S)-2-isopropylmalate + CoA + H(+). Its pathway is amino-acid biosynthesis; L-leucine biosynthesis; L-leucine from 3-methyl-2-oxobutanoate: step 1/4. Functionally, catalyzes the condensation of the acetyl group of acetyl-CoA with 3-methyl-2-oxobutanoate (2-ketoisovalerate) to form 3-carboxy-3-hydroxy-4-methylpentanoate (2-isopropylmalate). The polypeptide is 2-isopropylmalate synthase (Pyrococcus abyssi (strain GE5 / Orsay)).